We begin with the raw amino-acid sequence, 183 residues long: MSKKIMATQKVIIASLNPAKITAVESAFTSAFPNGTFEFVGVNVPSEVADQPMSDSETHLGALNRVRNAKACRADGAFYVGLEAGIDGNVTFAWTVIESHTHRGESRSASLMLPPNVIAKLANANELGDVMDEVFGTENIKQKGGAISLLTQNQLTRSSVYHQALILALIPFTNPEHFPANLS.

Asp75 contacts Mg(2+). 75-76 (DG) contributes to the substrate binding site.

It belongs to the YjjX NTPase family. Homodimer. Mg(2+) is required as a cofactor. Mn(2+) serves as cofactor.

It carries out the reaction XTP + H2O = XDP + phosphate + H(+). The enzyme catalyses ITP + H2O = IDP + phosphate + H(+). In terms of biological role, phosphatase that hydrolyzes non-canonical purine nucleotides such as XTP and ITP to their respective diphosphate derivatives. Probably excludes non-canonical purines from DNA/RNA precursor pool, thus preventing their incorporation into DNA/RNA and avoiding chromosomal lesions. The protein is Inosine/xanthosine triphosphatase of Vibrio vulnificus (strain CMCP6).